We begin with the raw amino-acid sequence, 313 residues long: Olfactory receptor 10P1 (313 aa).

The Extracellular segment spans residues 1–25; that stretch reads MAGENHTTLPEFLLLGFSDLKALQG. Asn-5 carries an N-linked (GlcNAc...) asparagine glycan. A helical membrane pass occupies residues 26-46; that stretch reads PLFWVVLLVYLVTLLGNSLII. Over 47 to 54 the chain is Cytoplasmic; sequence LLTQVSPA. The chain crosses the membrane as a helical span at residues 55–75; the sequence is LHSPMYFFLRQLSVVELFYTT. The Extracellular portion of the chain corresponds to 76–100; the sequence is DIVPRTLANLGSPHPQAISFQGCAA. A helical transmembrane segment spans residues 101–121; that stretch reads QMYVFIVLGISECCLLTAMAY. At 122-140 the chain is on the cytoplasmic side; the sequence is DRYVAICQPLRYSTLLSPR. The helical transmembrane segment at 141–161 threads the bilayer; sequence ACMAMVGTSWLTGIITATTHA. The Extracellular segment spans residues 162–198; sequence SLIFSLPFRSHPIIPHFLCDILPVLRLASAGKHRSEI. A helical transmembrane segment spans residues 199 to 218; sequence SVMTATIVFIMIPFSLIVTS. Residues 219-238 are Cytoplasmic-facing; the sequence is YIRILGAILAMASTQSRRKV. Residues 239 to 259 traverse the membrane as a helical segment; the sequence is FSTCSSHLLVVSLFFGTASIT. Topologically, residues 260–272 are extracellular; that stretch reads YIRPQAGSSVTTD. Residues 273–293 form a helical membrane-spanning segment; sequence RVLSLFYTVITPMLNPIIYTL. The Cytoplasmic segment spans residues 294 to 313; the sequence is RNKDVRRALRHLVKRQRPSP.

It belongs to the G-protein coupled receptor 1 family.

It is found in the cell membrane. In terms of biological role, odorant receptor. In Homo sapiens (Human), this protein is Olfactory receptor 10P1 (OR10P1).